Consider the following 913-residue polypeptide: DNA mismatch repair protein MutS (913 aa).

720 to 727 (GPNASGKS) is an ATP binding site.

Belongs to the DNA mismatch repair MutS family.

This protein is involved in the repair of mismatches in DNA. It is possible that it carries out the mismatch recognition step. This protein has a weak ATPase activity. The polypeptide is DNA mismatch repair protein MutS (Prochlorococcus marinus (strain MIT 9312)).